Reading from the N-terminus, the 383-residue chain is Chaperone protein DnaJ (383 aa).

One can recognise a J domain in the interval 4-68 (DLYETLNVSR…DQRARYDRFG (65 aa)). The segment at 139–221 (GGEKEITINH…CSGRGRNQKQ (83 aa)) adopts a CR-type zinc-finger fold. Zn(2+) is bound by residues C152, C155, C169, C172, C195, C198, C209, and C212. 4 CXXCXGXG motif repeats span residues 152-159 (CETCRGSG), 169-176 (CRNCGGQG), 195-202 (CPNCQGTG), and 209-216 (CPTCSGRG).

The protein belongs to the DnaJ family. Homodimer. Zn(2+) is required as a cofactor.

It localises to the cytoplasm. In terms of biological role, participates actively in the response to hyperosmotic and heat shock by preventing the aggregation of stress-denatured proteins and by disaggregating proteins, also in an autonomous, DnaK-independent fashion. Unfolded proteins bind initially to DnaJ; upon interaction with the DnaJ-bound protein, DnaK hydrolyzes its bound ATP, resulting in the formation of a stable complex. GrpE releases ADP from DnaK; ATP binding to DnaK triggers the release of the substrate protein, thus completing the reaction cycle. Several rounds of ATP-dependent interactions between DnaJ, DnaK and GrpE are required for fully efficient folding. Also involved, together with DnaK and GrpE, in the DNA replication of plasmids through activation of initiation proteins. The polypeptide is Chaperone protein DnaJ (Gloeobacter violaceus (strain ATCC 29082 / PCC 7421)).